A 146-amino-acid chain; its full sequence is Large ribosomal subunit protein uL15 (146 aa).

Residues M1–R13 are compositionally biased toward basic and acidic residues. The disordered stretch occupies residues M1–G52. Gly residues-rich tracts occupy residues R21–A31 and S42–G52.

Belongs to the universal ribosomal protein uL15 family. As to quaternary structure, part of the 50S ribosomal subunit.

Binds to the 23S rRNA. In Bacillus anthracis (strain A0248), this protein is Large ribosomal subunit protein uL15.